Reading from the N-terminus, the 178-residue chain is Killin (178 aa).

The DNA-binding element occupies 8–50 (SARPGRTVHVWGYRVEWKVRNGRKLQPSEWAGRGDLGGFKRRW).

Its subcellular location is the nucleus. Functionally, DNA-binding protein involved in S phase checkpoint control-coupled apoptosis by mediating p53/TP53-induced apoptosis. Has the ability to inhibit DNA synthesis and S phase arrest coupled to apoptosis. Has affinity to both double- and single-stranded DNA. The polypeptide is Killin (KLLN) (Homo sapiens (Human)).